Here is a 433-residue protein sequence, read N- to C-terminus: MPILPVPALNALLTKTIKTIKTGAAKNAHQHHVLHHTLKGLDNLPAPVLERINRRLKASTAEQYPLADAHLRLILAISNKLKRPLAIDKLPKLRQKFGTDAVSLQAPSVWQQNADASGSTENAVSWQDKTIANADGGDMTVRCYQKSTQNSERKSTDEAAMLFFHGGGFCIGDIDTHHEFCHTVCAQTGWAVVSVDYRMAPEYPAPTALKDCLAAYAWLAEHSQSLGASPSRIVLSGDSAGGCLAALVAQQVIKPIDALWQDNNQAPAADKKVNDTFKNSLADLPRPLAQLPLYPVTDYEAEYPSWELYGEGLLLDHNDAEVFNSAYTQHSGLPQSHPLISVMHGDNTQLCPSYIVVAELDILRDEGLAYAELLQKEGVQVQTYTVLGAPHGFINLMSVHQGLGNQTTYIINEFACLVQNLLTSEGDKPNLRA.

Residues 165-167 (HGG) carry the Involved in the stabilization of the negatively charged intermediate by the formation of the oxyanion hole motif. The active-site Charge relay system is the Ser-239. Active-site residues include Asp-361 and His-391.

The protein belongs to the 'GDXG' lipolytic enzyme family.

The enzyme catalyses a triacylglycerol + H2O = a diacylglycerol + a fatty acid + H(+). The protein is Lipase 2 (lip2) of Moraxella sp. (strain TA144).